The following is a 596-amino-acid chain: Aspartate--tRNA(Asp/Asn) ligase (596 aa).

Glu175 is an L-aspartate binding site. An aspartate region spans residues 199–202 (QQYK). L-aspartate is bound by residues Arg221 and His454. An ATP-binding site is contributed by 221–223 (RDE). Glu488 is a binding site for ATP. Arg495 lines the L-aspartate pocket. 540 to 543 (GVDR) serves as a coordination point for ATP.

Belongs to the class-II aminoacyl-tRNA synthetase family. Type 1 subfamily. Homodimer.

The protein localises to the cytoplasm. It catalyses the reaction tRNA(Asx) + L-aspartate + ATP = L-aspartyl-tRNA(Asx) + AMP + diphosphate. In terms of biological role, aspartyl-tRNA synthetase with relaxed tRNA specificity since it is able to aspartylate not only its cognate tRNA(Asp) but also tRNA(Asn). Reaction proceeds in two steps: L-aspartate is first activated by ATP to form Asp-AMP and then transferred to the acceptor end of tRNA(Asp/Asn). This Bartonella henselae (strain ATCC 49882 / DSM 28221 / CCUG 30454 / Houston 1) (Rochalimaea henselae) protein is Aspartate--tRNA(Asp/Asn) ligase.